Reading from the N-terminus, the 302-residue chain is RING-H2 finger protein ATL38 (302 aa).

The helical transmembrane segment at 15–35 (LLVITIILFAIFIVGLASVCF) threads the bilayer. Residues 96–138 (CAVCICEFEDHETLRLMPECCHVFHADCVSVWLSDHSTCPLCR) form an RING-type; atypical zinc finger. A disordered region spans residues 279–302 (GEAVAPSKDSRRISVEQSQLDDRV). A compositionally biased stretch (basic and acidic residues) spans 286 to 302 (KDSRRISVEQSQLDDRV).

It belongs to the RING-type zinc finger family. ATL subfamily.

The protein localises to the membrane. It catalyses the reaction S-ubiquitinyl-[E2 ubiquitin-conjugating enzyme]-L-cysteine + [acceptor protein]-L-lysine = [E2 ubiquitin-conjugating enzyme]-L-cysteine + N(6)-ubiquitinyl-[acceptor protein]-L-lysine.. It functions in the pathway protein modification; protein ubiquitination. This is RING-H2 finger protein ATL38 (ATL38) from Arabidopsis thaliana (Mouse-ear cress).